The chain runs to 626 residues: Forkhead box protein O1 (626 aa).

Pro residues predominate over residues 1-11; the sequence is MAEAPLPPPPG. 4 disordered regions span residues 1–57, 90–142, 218–319, and 484–519; these read MAEA…PAAG, DIRQ…SRRN, SSWW…MPEQ, and PTYG…MTHN. 2 stretches are compositionally biased toward low complexity: residues 37–48 and 101–133; these read NPSSSANSSPAP and QHPQ…AQQP. The segment at residues 144–238 is a DNA-binding region (fork-head); that stretch reads WGNLSYADLI…KNGKSPRRRA (95 aa). Basic residues predominate over residues 248–259; that stretch reads AKSRGRAAKKKA. The span at 262–277 shows a compositional bias: low complexity; the sequence is QSSQDGSSDSPGSQFS. 2 stretches are compositionally biased toward polar residues: residues 298–310 and 484–494; these read RPRT…TISG and PTYGSQPTHNK.

Post-translationally, phosphorylated by AKT1; insulin-induced. IGF1 rapidly induces phosphorylation of Thr-28, Ser-240 and Ser-303. Phosphorylation of Ser-240 decreases DNA-binding activity and promotes the phosphorylation of Thr-28, and Ser-303, which leads to nuclear exclusion and loss of function. Phosphorylation of Ser-313 is independent of IGF1 and leads to reduced function.

The protein resides in the cytoplasm. It localises to the nucleus. Functionally, transcription factor that regulates metabolic homeostasis in response to oxidative stress. Binds to the consensus sequence 5'-TT[G/A]TTTTG-3' and the related Daf-16 family binding element (DBE) with consensus sequence 5'-TT[G/A]TTTAC-3'. Main regulator of redox balance and osteoblast numbers and controls bone mass. Orchestrates the endocrine function of the skeleton in regulating glucose metabolism. Also acts as a key regulator of chondrogenic commitment of skeletal progenitor cells in response to lipid availability: when lipids levels are low, translocates to the nucleus and promotes expression of sox9, which induces chondrogenic commitment and suppresses fatty acid oxidation. Acts synergistically with atf4 to suppress osteocalcin/bglap activity, increasing glucose levels and triggering glucose intolerance and insulin insensitivity. Also suppresses the transcriptional activity of runx2, an upstream activator of osteocalcin/bglap. May act as a positive regulator of apoptosis in cardiac smooth muscle cells as a result of its transcriptional activation of pro-apoptotic genes. This Xenopus tropicalis (Western clawed frog) protein is Forkhead box protein O1.